The sequence spans 69 residues: Sperm protamine P1 (69 aa).

2 stretches are compositionally biased toward basic residues: residues Met1–Gly30 and Lys37–Asn69. The interval Met1–Asn69 is disordered.

This sequence belongs to the protamine P1 family. Testis.

It is found in the nucleus. It localises to the chromosome. Protamines substitute for histones in the chromatin of sperm during the haploid phase of spermatogenesis. They compact sperm DNA into a highly condensed, stable and inactive complex. This Tachyglossus aculeatus aculeatus (Southeast Australian short-beaked echidna) protein is Sperm protamine P1 (PRM1).